We begin with the raw amino-acid sequence, 319 residues long: MTYARIQGVGSYIPQQILSNADLEKMVNTTDEWIMQRVGVRERHVIANSPDNTTTMAVDAAKRAIEMAGIDPAVIDMIIVGTATAEYYFPSTACLVQKHLNLREDIPAFDINAACAGFVYALSIADQYIRNEGAKHILVIGVDSLTKVVDWKDRSTCILFGDGAGAVILQAHKEPGILNTILHANGDYSDLITAKSGVWERESVPHLHMYGKEVFKLAVTKLGEIVDEIIEKSGLKQSDIDWLIPHQANLRIIEATAKRLGLPRERVILTIEQHGNTSAASIPLALDAAVRAGKIKRGDTLLLEAFGAGLAWGAALLKL.

Active-site residues include Cys-115 and His-246. The ACP-binding stretch occupies residues 247–251; it reads QANLR. Residue Asn-276 is part of the active site.

Belongs to the thiolase-like superfamily. FabH family. In terms of assembly, homodimer.

The protein localises to the cytoplasm. It carries out the reaction malonyl-[ACP] + acetyl-CoA + H(+) = 3-oxobutanoyl-[ACP] + CO2 + CoA. It participates in lipid metabolism; fatty acid biosynthesis. In terms of biological role, catalyzes the condensation reaction of fatty acid synthesis by the addition to an acyl acceptor of two carbons from malonyl-ACP. Catalyzes the first condensation reaction which initiates fatty acid synthesis and may therefore play a role in governing the total rate of fatty acid production. Possesses both acetoacetyl-ACP synthase and acetyl transacylase activities. Its substrate specificity determines the biosynthesis of branched-chain and/or straight-chain of fatty acids. This chain is Beta-ketoacyl-[acyl-carrier-protein] synthase III, found in Coxiella burnetii (strain RSA 493 / Nine Mile phase I).